A 163-amino-acid chain; its full sequence is Putative C-type lectin protein FPV239 (163 aa).

The 112-residue stretch at 48–159 (CKEGWVGYNK…CFLPKKWICR (112 aa)) folds into the C-type lectin domain. 2 cysteine pairs are disulfide-bonded: Cys76–Cys158 and Cys137–Cys150.

The sequence is that of Putative C-type lectin protein FPV239 from Fowlpox virus (strain NVSL) (FPV).